The sequence spans 410 residues: Mating-type locus allele B6 protein (410 aa).

Positions 1–110 (MSRDPKLSLS…VNVASPAVEY (110 aa)) are variable domain between B alleles. The homeobox; TALE-type DNA-binding region spans 107–184 (AVEYRNLSED…NARRRSGWSH (78 aa)). The interval 111–410 (RNLSEDLPAY…PFFCLSIAFV (300 aa)) is highly conserved between B alleles. Disordered stretches follow at residues 202-224 (RAKL…PSDD), 278-335 (TPKP…TPEL), and 373-393 (KARG…QQPD). A compositionally biased stretch (polar residues) spans 205–219 (LSSSNQSTPPSLTSE). Residues 276–308 (KKTPKPGMPRPVTTVAKRQPARKTKPAAKPKSR) carry the Nuclear localization signal motif. Residues 294–307 (QPARKTKPAAKPKS) show a composition bias toward basic residues. Over residues 312-335 (PRASTTPSIDSTLDSSKLESTPEL) the composition is skewed to polar residues. Residues 333–410 (PELSMCSTAD…PFFCLSIAFV (78 aa)) are not essential for B6 function. Residues 375-388 (RGNRKVKALPKRAG) are compositionally biased toward basic residues.

Belongs to the TALE/M-ATYP homeobox family.

The protein resides in the nucleus. Functionally, the B locus has at least 25 alleles, and any combination of two different B alleles yields a multimeric regulatory protein, that activates genes responsible for the pathogenicity and for the sexual development of the fungus within the corn plant. The protein is Mating-type locus allele B6 protein of Mycosarcoma maydis (Corn smut fungus).